The chain runs to 269 residues: 4-hydroxy-tetrahydrodipicolinate reductase (269 aa).

Position 11–16 (11–16 (GPIGRM)) interacts with NAD(+). Lys39 lines the NADP(+) pocket. Residues 101–103 (GTT) and 125–128 (ASNF) contribute to the NAD(+) site. Catalysis depends on His158, which acts as the Proton donor/acceptor. His159 contacts (S)-2,3,4,5-tetrahydrodipicolinate. The active-site Proton donor is the Lys162. Residue 168–169 (GT) coordinates (S)-2,3,4,5-tetrahydrodipicolinate.

The protein belongs to the DapB family. Homotetramer.

It is found in the cytoplasm. It catalyses the reaction (S)-2,3,4,5-tetrahydrodipicolinate + NAD(+) + H2O = (2S,4S)-4-hydroxy-2,3,4,5-tetrahydrodipicolinate + NADH + H(+). The catalysed reaction is (S)-2,3,4,5-tetrahydrodipicolinate + NADP(+) + H2O = (2S,4S)-4-hydroxy-2,3,4,5-tetrahydrodipicolinate + NADPH + H(+). Its pathway is amino-acid biosynthesis; L-lysine biosynthesis via DAP pathway; (S)-tetrahydrodipicolinate from L-aspartate: step 4/4. Catalyzes the conversion of 4-hydroxy-tetrahydrodipicolinate (HTPA) to tetrahydrodipicolinate. This is 4-hydroxy-tetrahydrodipicolinate reductase from Buchnera aphidicola subsp. Acyrthosiphon pisum (strain APS) (Acyrthosiphon pisum symbiotic bacterium).